A 607-amino-acid polypeptide reads, in one-letter code: 1-deoxy-D-xylulose-5-phosphate synthase (607 aa).

Thiamine diphosphate contacts are provided by residues histidine 63 and 104–106 (GHS). Aspartate 135 is a Mg(2+) binding site. Residues 136–137 (GA), asparagine 164, tyrosine 271, and glutamate 351 each bind thiamine diphosphate. Asparagine 164 serves as a coordination point for Mg(2+).

The protein belongs to the transketolase family. DXPS subfamily. As to quaternary structure, homodimer. It depends on Mg(2+) as a cofactor. Thiamine diphosphate serves as cofactor.

It catalyses the reaction D-glyceraldehyde 3-phosphate + pyruvate + H(+) = 1-deoxy-D-xylulose 5-phosphate + CO2. It functions in the pathway metabolic intermediate biosynthesis; 1-deoxy-D-xylulose 5-phosphate biosynthesis; 1-deoxy-D-xylulose 5-phosphate from D-glyceraldehyde 3-phosphate and pyruvate: step 1/1. Catalyzes the acyloin condensation reaction between C atoms 2 and 3 of pyruvate and glyceraldehyde 3-phosphate to yield 1-deoxy-D-xylulose-5-phosphate (DXP). This chain is 1-deoxy-D-xylulose-5-phosphate synthase, found in Campylobacter hominis (strain ATCC BAA-381 / DSM 21671 / CCUG 45161 / LMG 19568 / NCTC 13146 / CH001A).